A 309-amino-acid polypeptide reads, in one-letter code: MQLLLALLALAYVAPSTEDSHWCYEIQAKEPNSHCSGPEQWTGDCKKNQQSPINIVTSKTKLNPSLTPFTFVGYDQKKKWEVKNNQHSVEMSLGEDIYIFGGDLPTQYKAIQLHLHWSEESNKGSEHSIDGKHFAMEMHVVHKKMTTGDKVQDSDSKDKIAVLAFMVEVGNEVNEGFQPLVEALSRLSKPFTNSTVSESCLQDMLPEKKKLSAYFRYQGSLTTPGCDETVIWTVFEEPIKIHKDQFLEFSKKLYYDQEQKLNMKDNVRPLQPLGNRQVFRSHASGRLLSLPLPTLLVPTLTCLVASFLH.

A signal peptide spans 1–17 (MQLLLALLALAYVAPST). Positions 20–282 (SHWCYEIQAK…LGNRQVFRSH (263 aa)) constitute an Alpha-carbonic anhydrase domain. Disulfide bonds link Cys23–Cys35 and Cys45–Cys226. His87 (proton donor/acceptor) is an active-site residue. His114, His116, and His139 together coordinate Zn(2+). Asn193 is a glycosylation site (N-linked (GlcNAc...) asparagine). Substrate is bound at residue 222–223 (TT). A lipid anchor (GPI-anchor amidated serine) is attached at Ser281. Positions 282-309 (HASGRLLSLPLPTLLVPTLTCLVASFLH) are cleaved as a propeptide — removed in mature form.

This sequence belongs to the alpha-carbonic anhydrase family. Interacts with SLC4A4. Zn(2+) serves as cofactor. Post-translationally, the N-terminus is blocked. Glycosylated. Present in kidney and lung. Also particularly abundant in brain, muscle, heart and liver. Not detected in skin or spleen.

It is found in the cell membrane. It carries out the reaction hydrogencarbonate + H(+) = CO2 + H2O. Inhibited by acetazolamide. Catalyzes the reversible hydration of carbon dioxide into bicarbonate and protons and thus is essential to maintaining intracellular and extracellular pH. May stimulate the sodium/bicarbonate transporter activity of SLC4A4 that acts in pH homeostasis. It is essential for acid overload removal from the retina and retina epithelium, and acid release in the choriocapillaris in the choroid. The protein is Carbonic anhydrase 4 (Ca4) of Rattus norvegicus (Rat).